The chain runs to 151 residues: Cytochrome c-type biogenesis protein CcmE (151 aa).

Topologically, residues 1–9 (MKGLKKKRR) are cytoplasmic. Residues 10-30 (IQIIALAFVALAGSTALIGYA) form a helical; Signal-anchor for type II membrane protein membrane-spanning segment. Topologically, residues 31-151 (MRDGINFFRS…FQHTEDQPQG (121 aa)) are periplasmic. Residues His-123 and Tyr-127 each coordinate heme.

It belongs to the CcmE/CycJ family.

The protein resides in the cell inner membrane. Its function is as follows. Heme chaperone required for the biogenesis of c-type cytochromes. Transiently binds heme delivered by CcmC and transfers the heme to apo-cytochromes in a process facilitated by CcmF and CcmH. This Cereibacter sphaeroides (strain ATCC 17029 / ATH 2.4.9) (Rhodobacter sphaeroides) protein is Cytochrome c-type biogenesis protein CcmE.